The chain runs to 262 residues: Acidic leucine-rich nuclear phosphoprotein 32 family member B (262 aa).

LRR repeat units lie at residues 16–40 (PGEV…LSSD), 43–64 (NLEF…PKLN), 65–87 (KLRK…AERT), and 89–110 (NLTH…EPLK). Residues 123-161 (CEVTMLINYRESVFTLLPQLTYLDGFDADEQEAPDSDPE) enclose the LRRCT domain. The segment covering 150 to 233 (ADEQEAPDSD…EDEEDDEADD (84 aa)) has biased composition (acidic residues). The tract at residues 150-262 (ADEQEAPDSD…PEDEEDDEDD (113 aa)) is disordered. A Nuclear localization signal motif is present at residues 240 to 243 (KRKR). Over residues 247-262 (DEGEEDPEDEEDDEDD) the composition is skewed to acidic residues.

The protein belongs to the ANP32 family. Interacts with histones H3 and H4. Interacts with KLF5; this interaction induces promoter region-specific histone incorporation and inhibition of histone acetylation by ANP32B. Directly cleaved by caspase-3/CASP3.

It localises to the nucleus. Functionally, multifunctional protein that is involved in the regulation of many processes including cell proliferation, apoptosis, cell cycle progression or transcription. Regulates the proliferation of neuronal stem cells, differentiation of leukemic cells and progression from G1 to S phase of the cell cycle. As negative regulator of caspase-3-dependent apoptosis, may act as an antagonist of ANP32A in regulating tissue homeostasis. Exhibits histone chaperone properties, able to recruit histones to certain promoters, thus regulating the transcription of specific genes. Also plays an essential role in the nucleocytoplasmic transport of specific mRNAs via the uncommon nuclear mRNA export receptor XPO1/CRM1. The chain is Acidic leucine-rich nuclear phosphoprotein 32 family member B (ANP32B) from Gallus gallus (Chicken).